We begin with the raw amino-acid sequence, 255 residues long: tRNA (guanine-N(1)-)-methyltransferase (255 aa).

S-adenosyl-L-methionine contacts are provided by residues Gly117 and 137 to 142 (LGDFVL).

The protein belongs to the RNA methyltransferase TrmD family. As to quaternary structure, homodimer.

It is found in the cytoplasm. The enzyme catalyses guanosine(37) in tRNA + S-adenosyl-L-methionine = N(1)-methylguanosine(37) in tRNA + S-adenosyl-L-homocysteine + H(+). In terms of biological role, specifically methylates guanosine-37 in various tRNAs. This Paraburkholderia xenovorans (strain LB400) protein is tRNA (guanine-N(1)-)-methyltransferase.